The chain runs to 111 residues: Antitoxin PrlF (111 aa).

The region spanning Thr12–Asp59 is the SpoVT-AbrB domain.

As to quaternary structure, homodimer; forms a complex with YhaV with stoichiometry PrlF(2)-YhaV(4), possibly as a YhaV(2)-PrlF(2)-YhaV(2) complex like the MazFE complex.

The protein localises to the cytoplasm. In terms of biological role, antitoxin component of a type II toxin-antitoxin (TA) system. Labile antitoxin that binds to the YhaV toxin and neutralizes its ribonuclease activity. Also acts as a transcription factor. The YhaV/PrlF complex binds the prlF-yhaV operon, probably negatively regulating its expression. The chain is Antitoxin PrlF (prlF) from Escherichia coli O6:H1 (strain CFT073 / ATCC 700928 / UPEC).